The sequence spans 425 residues: AP-3 complex subunit mu (425 aa).

Positions 175–423 constitute an MHD domain; that stretch reads TNEFFIHVLE…TIIAQNVSFR (249 aa).

This sequence belongs to the adaptor complexes medium subunit family.

Its subcellular location is the cytoplasm. It localises to the cytoskeleton. It is found in the microtubule organizing center. The protein localises to the spindle pole body. The protein resides in the membrane. Its subcellular location is the golgi apparatus. It localises to the cytoplasmic vesicle membrane. In terms of biological role, part of the AP-3 complex, an adaptor-related complex which is not clathrin-associated. The complex is associated with the Golgi region as well as more peripheral structures. It facilitates the budding of vesicles from the Golgi membrane and may be directly involved in trafficking to the vacuole. The chain is AP-3 complex subunit mu (apm3) from Schizosaccharomyces pombe (strain 972 / ATCC 24843) (Fission yeast).